Here is a 442-residue protein sequence, read N- to C-terminus: 3-isopropylmalate dehydratase large subunit (442 aa).

[4Fe-4S] cluster contacts are provided by C347, C407, and C410.

This sequence belongs to the aconitase/IPM isomerase family. LeuC type 1 subfamily. As to quaternary structure, heterodimer of LeuC and LeuD. The cofactor is [4Fe-4S] cluster.

The catalysed reaction is (2R,3S)-3-isopropylmalate = (2S)-2-isopropylmalate. Its pathway is amino-acid biosynthesis; L-leucine biosynthesis; L-leucine from 3-methyl-2-oxobutanoate: step 2/4. Its function is as follows. Catalyzes the isomerization between 2-isopropylmalate and 3-isopropylmalate, via the formation of 2-isopropylmaleate. The protein is 3-isopropylmalate dehydratase large subunit of Buchnera aphidicola subsp. Uroleucon solidaginis.